Reading from the N-terminus, the 535-residue chain is MSMKLRDILPAPVAADEAASQIRRDPWFGGRDNEPSAALVSKEPPPYGKRTSFRPRGPEDFGDGGAFPEIHVAQFPLGLGLGDMRGKPENTLALQYGTDGKLQHDAIARIGHVKDKVVYSKLNDMKAKTWNEDDDDIQKPDDDAVIDATEKTRMALEKIVNSKVASALPVRHADKLAPAQYIRYTPSQQNGAAGSQQRIIRMVEEQKDPMEPPKFKINQKIPRAPPSPPAPVMHSPPRKMTAKDQNDWKIPPCISNWKNPKGFTVGLDKRLAADGRGLQQTHINENFAKLADALYIADRKAREEVETRAQLERRVAQNKKSEQEAKMAEAAAKARQERSAMRRKDDEDDEQVKVREEIRRDRLDDIRKERNIARSRPDKADKLRKERERDISEKIVLGLPDTNQKRTGEPQFDQRLFDKTQGLDSGAMDDDTYNPYDAAWRGGDSVQQHVYRPSKNLDNDVYGGDLDKIIEQKNRFVADKGFSGAEGSSRGSGPVQFEKDQDVFGLSSLFEHTKEKKRGGDGGDSRGESKRSRRD.

6 disordered regions span residues 1–58, 211–254, 313–353, 376–416, 421–440, and 508–535; these read MSMK…PRGP, EPPK…PPCI, RRVA…EQVK, RPDK…DQRL, QGLDSGAMDDDTYNPYDAAW, and SLFEHTKEKKRGGDGGDSRGESKRSRRD. The span at 22 to 34 shows a compositional bias: basic and acidic residues; it reads IRRDPWFGGRDNE. The interval 179–342 is SNW; sequence AQYIRYTPSQ…KARQERSAMR (164 aa). A compositionally biased stretch (basic and acidic residues) spans 376-393; that stretch reads RPDKADKLRKERERDISE. The segment covering 511-535 has biased composition (basic and acidic residues); the sequence is EHTKEKKRGGDGGDSRGESKRSRRD.

Belongs to the SNW family.

This is an uncharacterized protein from Caenorhabditis elegans.